The chain runs to 505 residues: L-carnitine/gamma-butyrobetaine antiporter (505 aa).

Transmembrane regions (helical) follow at residues 10–30, 51–71, 92–112, 143–163, 195–215, 231–251, 263–283, 316–336, 347–367, 403–423, 446–466, and 475–495; these read IEPK…WLTV, WGWA…WLVF, IFMM…SIEI, GPLP…FFFV, FYLV…TPLV, LDAI…ACGL, SYLS…SFIM, WTVF…IFLA, LCFG…TVLG, LSTA…VTLI, LLVR…LLAL, and AIIA…LSFI.

Belongs to the BCCT transporter (TC 2.A.15) family. CaiT subfamily. Homotrimer.

It is found in the cell inner membrane. It catalyses the reaction 4-(trimethylamino)butanoate(in) + (R)-carnitine(out) = 4-(trimethylamino)butanoate(out) + (R)-carnitine(in). It participates in amine and polyamine metabolism; carnitine metabolism. In terms of biological role, catalyzes the exchange of L-carnitine for gamma-butyrobetaine. This is L-carnitine/gamma-butyrobetaine antiporter from Salmonella choleraesuis (strain SC-B67).